A 453-amino-acid chain; its full sequence is Mitochondrial import inner membrane translocase subunit TIM44 (453 aa).

A Phosphothreonine modification is found at T129. 167 to 174 provides a ligand contact to ATP; it reads GGEKLGKT. An N6-succinyllysine modification is found at K178. The residue at position 181 (S181) is a Phosphoserine. Residue K218 is modified to N6-succinyllysine.

This sequence belongs to the Tim44 family. As to quaternary structure, probable component of the PAM complex at least composed of a mitochondrial HSP70 protein, GRPEL1 or GRPEL2, TIMM44, TIMM16/PAM16 and TIMM14/DNAJC19. The complex interacts with the TIMM23 component of the TIM23 complex. Interacts with SLC25A4/ANT1 and SLC25A5/ANT2; leading to inhibit the presequence translocase TIMM23, thereby promoting stabilization of PINK1.

Its subcellular location is the mitochondrion inner membrane. The protein resides in the mitochondrion matrix. Essential component of the PAM complex, a complex required for the translocation of transit peptide-containing proteins from the inner membrane into the mitochondrial matrix in an ATP-dependent manner. Recruits mitochondrial HSP70 to drive protein translocation into the matrix using ATP as an energy source. The protein is Mitochondrial import inner membrane translocase subunit TIM44 (Timm44) of Rattus norvegicus (Rat).